Here is a 272-residue protein sequence, read N- to C-terminus: Indole-3-glycerol phosphate synthase (272 aa).

This sequence belongs to the TrpC family.

It carries out the reaction 1-(2-carboxyphenylamino)-1-deoxy-D-ribulose 5-phosphate + H(+) = (1S,2R)-1-C-(indol-3-yl)glycerol 3-phosphate + CO2 + H2O. The protein operates within amino-acid biosynthesis; L-tryptophan biosynthesis; L-tryptophan from chorismate: step 4/5. The protein is Indole-3-glycerol phosphate synthase of Mycobacterium sp. (strain JLS).